The primary structure comprises 509 residues: MEEIQGYLQRKRSQQQDFLYPLIFQEYIYAFAHARGFSRLILSENPGYDNKSSLLLVKRLITRMYQQNHFLICPNDSNQNPFLARNKNLYSQIISEGFAFIVEIPFSLRLISCLEVKKIVKSQTLRSIHSIFPFLEDNFSHLNFVLDVLIPHPVHVEILVQTLRYWLKDASSLHLLRFFLNEYCNWNSFILPKKDGSSFSKRNQRLFLFLYNSHVWEYESIFVFLRNQSAHLRSTSSGVLLERIYFYGKMERLVNVFVKVKDFRSNPRLIKEPCMHYIRYQRKSILASKGMSLFMNKWKCYLVTLWQWHFSLWFQPRRIYINQLANHSFEFLGYLSSVRMNPSVIRSQILENAFLINNAIKKFDTLVPIIPLIMSLAKAKFCNVLGHPISKPVWADLSDSNIIDRFRRICRNFSHYHSGSSTKRSLYQIKYILRLSCARTLARKHKSTVRVFLKRSDSELLEEFFMSEEGVLFCTFQKAFSTLRGIYRSRVWYLDIFSINDLANHKSRF.

The protein belongs to the intron maturase 2 family. MatK subfamily.

Its subcellular location is the plastid. The protein resides in the chloroplast. In terms of biological role, usually encoded in the trnK tRNA gene intron. Probably assists in splicing its own and other chloroplast group II introns. The chain is Maturase K from Avicennia marina (Grey mangrove).